Reading from the N-terminus, the 244-residue chain is Ribonuclease PH (244 aa).

Residues Arg86 and 124–126 (GTR) each bind phosphate.

Belongs to the RNase PH family. In terms of assembly, homohexameric ring arranged as a trimer of dimers.

It catalyses the reaction tRNA(n+1) + phosphate = tRNA(n) + a ribonucleoside 5'-diphosphate. Phosphorolytic 3'-5' exoribonuclease that plays an important role in tRNA 3'-end maturation. Removes nucleotide residues following the 3'-CCA terminus of tRNAs; can also add nucleotides to the ends of RNA molecules by using nucleoside diphosphates as substrates, but this may not be physiologically important. Probably plays a role in initiation of 16S rRNA degradation (leading to ribosome degradation) during starvation. The chain is Ribonuclease PH from Glaesserella parasuis serovar 5 (strain SH0165) (Haemophilus parasuis).